The primary structure comprises 73 residues: Toxin Td9 (73 aa).

Residues 1-7 (IGMVAEC) form the signal peptide. Residues 8–70 (KDGYLVGDDG…IWNSATNSCG (63 aa)) enclose the LCN-type CS-alpha/beta domain. Disulfide bonds link cysteine 18–cysteine 69, cysteine 22–cysteine 44, cysteine 30–cysteine 50, and cysteine 34–cysteine 52. A Lysine amide modification is found at lysine 71.

Belongs to the long (4 C-C) scorpion toxin superfamily. Sodium channel inhibitor family. Beta subfamily. As to expression, expressed by the venom gland.

Its subcellular location is the secreted. In terms of biological role, beta toxins bind voltage-independently at site-4 of sodium channels (Nav) and shift the voltage of activation toward more negative potentials thereby affecting sodium channel activation and promoting spontaneous and repetitive firing. The protein is Toxin Td9 of Tityus discrepans (Venezuelan scorpion).